A 159-amino-acid polypeptide reads, in one-letter code: uncharacterized protein (159 aa).

2 helical membrane-spanning segments follow: residues 59–79 (IGAL…ALVY) and 91–113 (VFSV…RRVC).

The protein resides in the cell membrane. This is an uncharacterized protein from Treponema pallidum (strain Nichols).